Reading from the N-terminus, the 393-residue chain is MAGPEWQSLEQCLEKHLPPDDLAQVKRILYGKQTRNLDLPREALKAASERNFELKGYAFGAAKEQQRCPQIVRVGLVQNRIPLPTSAPVAEQVSALHKSIEEIAEVAAMCGVNIICFQEAWNMPFAFCTREKLPWTEFAESAEDGLTTRFCQKLAKKHNMVVVSPILERDREHGGVLWNTAVVISNSGLVMGKTRKNHIPRVGDFNESTYYMEGNLGHPVFQTQFGRIAVNICYGRHHPLNWLMYSINGAEIIFNPSATIGELSESLWPIEARNAAIANHCFTCALNRVGQEHFPNEFTSGDGKKAHHDLGYFYGSSYVAAPDGSRTPGLSRNQDGLLVTELNLNLCQQINDFWTFKMTGRLEMYARELAEAVKPNYSPNIVKEDLVLAPSSG.

Residues 72-344 (VRVGLVQNRI…DGLLVTELNL (273 aa)) form the CN hydrolase domain. The active-site Proton acceptor is glutamate 119. Residue lysine 196 is the Proton donor of the active site. The active-site Nucleophile is the cysteine 233. Serine 378 is subject to Phosphoserine.

Belongs to the carbon-nitrogen hydrolase superfamily. BUP family. Homodimer, homotetramer, homooctamer; can also form higher homooligomers.

It is found in the cytoplasm. It catalyses the reaction 3-(carbamoylamino)propanoate + H2O + 2 H(+) = beta-alanine + NH4(+) + CO2. The catalysed reaction is 3-(carbamoylamino)-2-methylpropanoate + H2O + 2 H(+) = (R)-3-amino-2-methylpropanoate + NH4(+) + CO2. It functions in the pathway amino-acid biosynthesis; beta-alanine biosynthesis. Functionally, catalyzes a late step in pyrimidine degradation. Converts N-carbamoyl-beta-alanine (3-ureidopropanoate) into beta-alanine, ammonia and carbon dioxide. Likewise, converts N-carbamoyl-beta-aminoisobutyrate (3-ureidoisobutyrate) into beta-aminoisobutyrate, ammonia and carbon dioxide. In Mus musculus (Mouse), this protein is Beta-ureidopropionase (Upb1).